The primary structure comprises 49 residues: DNA-directed RNA polymerase subunit Rpo12 (49 aa).

3 residues coordinate Zn(2+): C11, C27, and C30.

The protein belongs to the archaeal Rpo12/eukaryotic RPC10 RNA polymerase subunit family. As to quaternary structure, part of the RNA polymerase complex. The cofactor is Zn(2+).

The protein resides in the cytoplasm. The catalysed reaction is RNA(n) + a ribonucleoside 5'-triphosphate = RNA(n+1) + diphosphate. In terms of biological role, DNA-dependent RNA polymerase (RNAP) catalyzes the transcription of DNA into RNA using the four ribonucleoside triphosphates as substrates. This is DNA-directed RNA polymerase subunit Rpo12 from Pyrococcus abyssi (strain GE5 / Orsay).